The sequence spans 240 residues: 2,3,4,5-tetrahydropyridine-2,6-dicarboxylate N-acetyltransferase (240 aa).

Belongs to the transferase hexapeptide repeat family. DapH subfamily.

It carries out the reaction (S)-2,3,4,5-tetrahydrodipicolinate + acetyl-CoA + H2O = L-2-acetamido-6-oxoheptanedioate + CoA. It participates in amino-acid biosynthesis; L-lysine biosynthesis via DAP pathway; LL-2,6-diaminopimelate from (S)-tetrahydrodipicolinate (acetylase route): step 1/3. Catalyzes the transfer of an acetyl group from acetyl-CoA to tetrahydrodipicolinate. This Bacillus cereus (strain G9842) protein is 2,3,4,5-tetrahydropyridine-2,6-dicarboxylate N-acetyltransferase.